The chain runs to 142 residues: MGKTHGMGAARKLKSHRRTQRWADKSYKKSHLGNEWKKPFAGSSHAKGIVLEKIGIEAKQPNSAIRKCARVQLIKNGKKIAAFVPNDGCLNYIEENDEVLIAGFGRKGHAVGDIPGVRFKVVKVSGVSLLALFKEKKEKPRS.

The disordered stretch occupies residues 1-30 (MGKTHGMGAARKLKSHRRTQRWADKSYKKS). Over residues 11-20 (RKLKSHRRTQ) the composition is skewed to basic residues. Basic and acidic residues predominate over residues 21–30 (RWADKSYKKS). Pro-61 carries the post-translational modification Hydroxyproline.

The protein belongs to the universal ribosomal protein uS12 family.

This Euphorbia esula (Leafy spurge) protein is Small ribosomal subunit protein uS12 (RPS23).